Reading from the N-terminus, the 339-residue chain is Deubiquitinase and deneddylase Dub2 (339 aa).

The helical transmembrane segment at 36-56 threads the bilayer; it reads IIIALFLIVISCGLILCAYTF. Residues His-203, Asp-220, and Cys-282 contribute to the active site.

It belongs to the peptidase C48 family.

Its subcellular location is the secreted. It localises to the host cell. The protein resides in the membrane. In terms of biological role, effector proteins function to alter host cell physiology and promote bacterial survival in host tissues. This protease possesses deubiquitinating and deneddylating activities. The polypeptide is Deubiquitinase and deneddylase Dub2 (cdu2) (Chlamydia trachomatis serovar A (strain ATCC VR-571B / DSM 19440 / HAR-13)).